An 84-amino-acid polypeptide reads, in one-letter code: Cell division topological specificity factor (84 aa).

It belongs to the MinE family.

Prevents the cell division inhibition by proteins MinC and MinD at internal division sites while permitting inhibition at polar sites. This ensures cell division at the proper site by restricting the formation of a division septum at the midpoint of the long axis of the cell. This is Cell division topological specificity factor from Burkholderia mallei (strain NCTC 10247).